Consider the following 122-residue polypeptide: MIQPQTHLNVADNSGARKLMCIRIIGASNRRYAHIGDVIVAVIKEAVPHMSLEKSEVVRAVIVRTCKELKRDCGMIIRYDDNAAIVIDQKGNPKGSRVFGAIPEELRQFGFTKILSIAPEVL.

Belongs to the universal ribosomal protein uL14 family. As to quaternary structure, part of the 50S ribosomal subunit.

The protein resides in the plastid. Its subcellular location is the chloroplast. Functionally, binds to 23S rRNA. In Jasminum nudiflorum (Winter jasmine), this protein is Large ribosomal subunit protein uL14c.